Reading from the N-terminus, the 79-residue chain is uncharacterized protein (79 aa).

The disordered stretch occupies residues 20 to 52 (TERGAGLSPAAPPDPSPAIAPTMAEGGVPSPGP).

This is an uncharacterized protein from Homo sapiens (Human).